Here is a 375-residue protein sequence, read N- to C-terminus: E3 ubiquitin-protein ligase FANCL (375 aa).

Residues 104–294 (QPPSCSFCKD…KDVLEIDFPA (191 aa)) are UBC-RWD region (URD). The segment at 307-363 (CGICYARHLNGAIPDQVCNNPQCGQPFHEICLYEWLRGLSTSRQSFNVFFGDCPYCS) adopts an RING-type; degenerate zinc-finger fold.

In terms of assembly, belongs to the multisubunit FA complex composed of FANCA, FANCB, FANCC, FANCE, FANCF, FANCG, FANCL/PHF9 and FANCM. In complex with FANCF, FANCA and FANCG, but not with FANCC, nor FANCE, interacts with HES1; this interaction may be essential for the stability and nuclear localization of FA core complex proteins. Interacts with FANCI. Interacts with GGN. Interacts (via the RING-type zinc finger) with UBE2T and UBE2W. The RING-type zinc finger domain is monoubiquitinated in the presence of UBE2T and UBE2W.

Its subcellular location is the cytoplasm. The protein localises to the nucleus. The catalysed reaction is S-ubiquitinyl-[E2 ubiquitin-conjugating enzyme]-L-cysteine + [acceptor protein]-L-lysine = [E2 ubiquitin-conjugating enzyme]-L-cysteine + N(6)-ubiquitinyl-[acceptor protein]-L-lysine.. It functions in the pathway protein modification; protein ubiquitination. In terms of biological role, ubiquitin ligase protein that mediates monoubiquitination of FANCD2, a key step in the DNA damage pathway. Also mediates monoubiquitination of FANCI. May stimulate the ubiquitin release from UBE2W. May be required for proper primordial germ cell proliferation in the embryonic stage, whereas it is probably not needed for spermatogonial proliferation after birth. This Mus musculus (Mouse) protein is E3 ubiquitin-protein ligase FANCL (Fancl).